The chain runs to 237 residues: Ribonuclease PH (237 aa).

Residues Arg-86 and Gly-124 to Arg-126 contribute to the phosphate site.

Belongs to the RNase PH family. Homohexameric ring arranged as a trimer of dimers.

The enzyme catalyses tRNA(n+1) + phosphate = tRNA(n) + a ribonucleoside 5'-diphosphate. In terms of biological role, phosphorolytic 3'-5' exoribonuclease that plays an important role in tRNA 3'-end maturation. Removes nucleotide residues following the 3'-CCA terminus of tRNAs; can also add nucleotides to the ends of RNA molecules by using nucleoside diphosphates as substrates, but this may not be physiologically important. Probably plays a role in initiation of 16S rRNA degradation (leading to ribosome degradation) during starvation. The sequence is that of Ribonuclease PH from Idiomarina loihiensis (strain ATCC BAA-735 / DSM 15497 / L2-TR).